The chain runs to 478 residues: Serine hydroxymethyltransferase, cytosolic (478 aa).

The residue at position 251 (Lys-251) is an N6-(pyridoxal phosphate)lysine.

Belongs to the SHMT family. As to quaternary structure, homotetramer. Identified in complex with FAM175B and the other subunits of the BRISC complex, at least composed of FAM175B/ABRO1, BRCC3/BRCC36, BABAM2 and BABAM1/NBA1. Requires pyridoxal 5'-phosphate as cofactor.

It is found in the cytoplasm. The enzyme catalyses (6R)-5,10-methylene-5,6,7,8-tetrahydrofolate + glycine + H2O = (6S)-5,6,7,8-tetrahydrofolate + L-serine. It participates in one-carbon metabolism; tetrahydrofolate interconversion. Interconversion of serine and glycine. This Mus musculus (Mouse) protein is Serine hydroxymethyltransferase, cytosolic (Shmt1).